A 146-amino-acid chain; its full sequence is Arginine vasopressin-induced protein 1 (146 aa).

2 disordered regions span residues 1-31 (MGTP…RKQA) and 80-146 (RRKR…QIRH). The span at 80 to 92 (RRKRPPRQNHCSR) shows a compositional bias: basic residues. Residues 106–123 (QASTTDTASSEQFGNSRR) show a composition bias toward polar residues.

May be involved in MAP kinase activation, epithelial sodium channel (ENaC) down-regulation and cell cycling. The chain is Arginine vasopressin-induced protein 1 (Avpi1) from Rattus norvegicus (Rat).